The following is a 217-amino-acid chain: Ras-related protein Rab-19 (217 aa).

Positions 26, 28, 29, 30, 31, 32, 42, 43, 44, 45, and 49 each coordinate GTP. Residue T31 coordinates Mg(2+). A Switch 1 motif is present at residues 39-54; that stretch reads SGVYSESQQNTIGVDF. T49 and D72 together coordinate Mg(2+). The short motif at 74–89 is the Switch 2 element; the sequence is AGQERFRTITQSYYRS. 7 residues coordinate GTP: G75, N130, K131, D133, S161, A162, and K163. S-geranylgeranyl cysteine attachment occurs at residues C215 and C217. At C217 the chain carries Cysteine methyl ester.

This sequence belongs to the small GTPase superfamily. Rab family. Requires Mg(2+) as cofactor.

It is found in the cell membrane. It carries out the reaction GTP + H2O = GDP + phosphate + H(+). Its activity is regulated as follows. Regulated by guanine nucleotide exchange factors (GEFs) which promote the exchange of bound GDP for free GTP. Regulated by GTPase activating proteins (GAPs) which increase the GTP hydrolysis activity. Inhibited by GDP dissociation inhibitors (GDIs). Its function is as follows. The small GTPases Rab are key regulators of intracellular membrane trafficking, from the formation of transport vesicles to their fusion with membranes. Rabs cycle between an inactive GDP-bound form and an active GTP-bound form that is able to recruit to membranes different set of downstream effectors directly responsible for vesicle formation, movement, tethering and fusion. The polypeptide is Ras-related protein Rab-19 (Rattus norvegicus (Rat)).